The primary structure comprises 938 residues: Isoleucine--tRNA ligase (938 aa).

The 'HIGH' region motif lies at 58–68 (PYANGNIHMGH). Glu-566 serves as a coordination point for L-isoleucyl-5'-AMP. The short motif at 607–611 (KMSKS) is the 'KMSKS' region element. Residue Lys-610 participates in ATP binding. Zn(2+) contacts are provided by Cys-906, Cys-909, Cys-926, and Cys-929.

The protein belongs to the class-I aminoacyl-tRNA synthetase family. IleS type 1 subfamily. As to quaternary structure, monomer. Zn(2+) is required as a cofactor.

It localises to the cytoplasm. It catalyses the reaction tRNA(Ile) + L-isoleucine + ATP = L-isoleucyl-tRNA(Ile) + AMP + diphosphate. Its function is as follows. Catalyzes the attachment of isoleucine to tRNA(Ile). As IleRS can inadvertently accommodate and process structurally similar amino acids such as valine, to avoid such errors it has two additional distinct tRNA(Ile)-dependent editing activities. One activity is designated as 'pretransfer' editing and involves the hydrolysis of activated Val-AMP. The other activity is designated 'posttransfer' editing and involves deacylation of mischarged Val-tRNA(Ile). The sequence is that of Isoleucine--tRNA ligase from Nitratidesulfovibrio vulgaris (strain ATCC 29579 / DSM 644 / CCUG 34227 / NCIMB 8303 / VKM B-1760 / Hildenborough) (Desulfovibrio vulgaris).